The sequence spans 694 residues: Putative bifunctional polynucleotide kinase/RNA ligase (694 aa).

Residues 1 to 385 (MLHVSRLLAN…TKQALNNKLA (385 aa)) form a ligase domain region. The bifunctional 5'-OH polynucleotide kinase/polynucleotide 3'-phosphatase stretch occupies residues 394–694 (KQLLVLIGIS…FNVCRDYLEF (301 aa)). Residue 401–408 (GISGSGKS) coordinates ATP.

It carries out the reaction a 5'-end dephospho-2'-deoxyribonucleoside-DNA + ATP = a 5'-end 5'-phospho-2'-deoxyribonucleoside-DNA + ADP + H(+). It catalyses the reaction ATP + (ribonucleotide)n-3'-hydroxyl + 5'-phospho-(ribonucleotide)m = (ribonucleotide)n+m + AMP + diphosphate.. Trifunctional enzyme that possesses a bifunctional polynucleotide kinase/phosphatase activity and an ATP-dependent RNA ligase activity. May therefore play a role to evade an RNA damage-based host response. This Autographa californica nuclear polyhedrosis virus (AcMNPV) protein is Putative bifunctional polynucleotide kinase/RNA ligase (PNK/PNL).